The primary structure comprises 362 residues: Dihydroorotate dehydrogenase (quinone) (362 aa).

Residues 62-66 and T86 contribute to the FMN site; that span reads AGYDK. A substrate-binding site is contributed by K66. 111-115 contacts substrate; it reads NRLGF. The FMN site is built by N139 and N170. N170 contributes to the substrate binding site. The active-site Nucleophile is the S173. Residue N175 coordinates substrate. FMN-binding residues include K215 and S243. 244 to 245 serves as a coordination point for substrate; it reads NT. FMN-binding positions include G266, G295, and 316–317; that span reads YS.

It belongs to the dihydroorotate dehydrogenase family. Type 2 subfamily. In terms of assembly, monomer. FMN is required as a cofactor.

It is found in the cell membrane. It catalyses the reaction (S)-dihydroorotate + a quinone = orotate + a quinol. It functions in the pathway pyrimidine metabolism; UMP biosynthesis via de novo pathway; orotate from (S)-dihydroorotate (quinone route): step 1/1. In terms of biological role, catalyzes the conversion of dihydroorotate to orotate with quinone as electron acceptor. The protein is Dihydroorotate dehydrogenase (quinone) of Rhizobium leguminosarum bv. trifolii (strain WSM2304).